A 178-amino-acid chain; its full sequence is Nascent polypeptide-associated complex subunit alpha (178 aa).

The NAC-A/B domain occupies 16 to 80 (PKNEKKAREL…AKVDDMNQRI (65 aa)). Positions 82–100 (EAQAQQAQQEALQKAAADA) are enriched in low complexity. The tract at residues 82-145 (EAQAQQAQQE…DETGLDPKDI (64 aa)) is disordered. Basic and acidic residues predominate over residues 101-126 (GKTEDKSPEAITADLEKASLGDKKAE). The span at 127 to 139 (DEEEDEGEIDETG) shows a compositional bias: acidic residues. One can recognise a UBA domain in the interval 140 to 178 (LDPKDIEIVVEQTQVSRAKAVKALRNHDGDMVNAIMDLS).

This sequence belongs to the NAC-alpha family. In terms of assembly, part of the nascent polypeptide-associated complex (NAC), consisting of EGD2 and EGD1. NAC associates with ribosomes via EGD1.

The protein resides in the cytoplasm. It localises to the nucleus. In terms of biological role, component of the nascent polypeptide-associated complex (NAC), a dynamic component of the ribosomal exit tunnel, protecting the emerging polypeptides from interaction with other cytoplasmic proteins to ensure appropriate nascent protein targeting. The NAC complex also promotes mitochondrial protein import by enhancing productive ribosome interactions with the outer mitochondrial membrane and blocks the inappropriate interaction of ribosomes translating non-secretory nascent polypeptides with translocation sites in the membrane of the endoplasmic reticulum. EGD2 may also be involved in transcription regulation. In Candida albicans (strain SC5314 / ATCC MYA-2876) (Yeast), this protein is Nascent polypeptide-associated complex subunit alpha (EGD2).